A 368-amino-acid chain; its full sequence is 3-dehydroquinate synthase (368 aa).

Residues 99-103 (GVVGD), 123-124 (TT), Lys-136, and Lys-145 contribute to the NAD(+) site. Zn(2+) is bound by residues Glu-178, His-242, and His-259.

It belongs to the sugar phosphate cyclases superfamily. Dehydroquinate synthase family. NAD(+) serves as cofactor. It depends on Co(2+) as a cofactor. The cofactor is Zn(2+).

It is found in the cytoplasm. It catalyses the reaction 7-phospho-2-dehydro-3-deoxy-D-arabino-heptonate = 3-dehydroquinate + phosphate. Its pathway is metabolic intermediate biosynthesis; chorismate biosynthesis; chorismate from D-erythrose 4-phosphate and phosphoenolpyruvate: step 2/7. In terms of biological role, catalyzes the conversion of 3-deoxy-D-arabino-heptulosonate 7-phosphate (DAHP) to dehydroquinate (DHQ). The chain is 3-dehydroquinate synthase from Chlorobaculum tepidum (strain ATCC 49652 / DSM 12025 / NBRC 103806 / TLS) (Chlorobium tepidum).